Reading from the N-terminus, the 222-residue chain is Phosphatidylinositol phosphate synthase (222 aa).

31–34 lines the a CDP-1,2-diacyl-sn-glycerol pocket; sequence DIVT. 2 helical membrane passes run 32–49 and 55–74; these read IVTL…LTLF and WWGA…DGAM. Residues Asp-68 and Asp-71 each contribute to the Mg(2+) site. A CDP-1,2-diacyl-sn-glycerol-binding residues include Gly-72, Arg-76, and Thr-82. 2 residues coordinate Mg(2+): Asp-89 and Asp-93. Asp-93 functions as the Proton acceptor in the catalytic mechanism. 4 helical membrane-spanning segments follow: residues 95–112, 118–136, 156–173, and 179–196; these read LGDG…AFGL, VVAT…YIKA, LVIV…FFPL, and VAMW…LQRV.

The protein belongs to the CDP-alcohol phosphatidyltransferase class-I family. In terms of assembly, homodimer. Mg(2+) is required as a cofactor.

The protein localises to the cell membrane. The protein resides in the secreted. Its subcellular location is the cell wall. It catalyses the reaction a CDP-1,2-diacyl-sn-glycerol + 1D-myo-inositol 3-phosphate = a 1,2-diacyl-sn-glycero-3-phospho-(1D-myo-inositol-3-phosphate) + CMP + H(+). The enzyme catalyses 1,2-di-(9Z-octadecenoyl)-sn-glycero-3-cytidine-5'-diphosphate + 1D-myo-inositol 3-phosphate = 1,2-di-(9Z-octadecenoyl)-sn-glycero-3-phospho-(1D-myo-inositol-3-phosphate) + CMP + H(+). The catalysed reaction is 1,2-dihexadecanoyl-sn-glycero-3-CDP + 1D-myo-inositol 3-phosphate = 1,2-dihexadecanoyl-sn-glycero-3-phospho-(1D-myo-inositol-3-phosphate) + CMP + H(+). Its pathway is phospholipid metabolism; phosphatidylinositol phosphate biosynthesis. Its activity is regulated as follows. Competitively inhibited by several inositol 1-phosphate analogs, including the phosphonate analog 1-deoxy-1-phosphonomethyl-myo-inositol (Ino-C-P). This leads to inhibition of M.smegmatis growth. Its function is as follows. Catalyzes the conjugation of the 1'-hydroxyl group of D-myo-inositol-3-phosphate (also named L-myo-inositol-1-phosphate) with a lipid tail of cytidine diphosphate diacylglycerol (CDP-DAG), forming phosphatidylinositol phosphate (PIP) and CMP. PIP is a precursor of phosphatidylinositol (PI) which is an essential lipid for mycobacteria required for formation of their cell wall. Is essential to the survival of M.smegmatis. The sequence is that of Phosphatidylinositol phosphate synthase from Mycolicibacterium smegmatis (strain ATCC 700084 / mc(2)155) (Mycobacterium smegmatis).